Here is a 618-residue protein sequence, read N- to C-terminus: Proline--tRNA ligase (618 aa).

It belongs to the class-II aminoacyl-tRNA synthetase family. ProS type 1 subfamily. Homodimer.

The protein resides in the cytoplasm. It catalyses the reaction tRNA(Pro) + L-proline + ATP = L-prolyl-tRNA(Pro) + AMP + diphosphate. Its function is as follows. Catalyzes the attachment of proline to tRNA(Pro) in a two-step reaction: proline is first activated by ATP to form Pro-AMP and then transferred to the acceptor end of tRNA(Pro). As ProRS can inadvertently accommodate and process non-cognate amino acids such as alanine and cysteine, to avoid such errors it has two additional distinct editing activities against alanine. One activity is designated as 'pretransfer' editing and involves the tRNA(Pro)-independent hydrolysis of activated Ala-AMP. The other activity is designated 'posttransfer' editing and involves deacylation of mischarged Ala-tRNA(Pro). The misacylated Cys-tRNA(Pro) is not edited by ProRS. The polypeptide is Proline--tRNA ligase (Streptococcus pyogenes serotype M3 (strain ATCC BAA-595 / MGAS315)).